The sequence spans 525 residues: Protein-export membrane protein SecD (525 aa).

6 consecutive transmembrane segments (helical) span residues 16 to 36 (VLLL…KGLT), 368 to 388 (QAII…YFHY), 395 to 415 (IPVA…AALI), 421 to 441 (LPSI…QIVI), 466 to 486 (AFFI…FLLV), and 488 to 508 (FVGT…IGVL).

Belongs to the SecD/SecF family. SecD subfamily. As to quaternary structure, part of the protein translocation apparatus. Forms a complex with SecF.

The protein resides in the cell membrane. Involved in protein export. The protein is Protein-export membrane protein SecD of Thermococcus gammatolerans (strain DSM 15229 / JCM 11827 / EJ3).